Reading from the N-terminus, the 307-residue chain is Nitric oxide synthase-interacting protein homolog (307 aa).

Positions 120–159 (PAMTPAHSSAAASEKPSTSSAAAAASSESSSASSISNMTN) are disordered. The segment covering 127 to 155 (SSAAASEKPSTSSAAAAASSESSSASSIS) has biased composition (low complexity).

Belongs to the NOSIP family.

It is found in the cytoplasm. It localises to the nucleus. Negatively regulates nitric oxide production by inducing nitric oxide synthase translocation to actin cytoskeleton and inhibiting its enzymatic activity. This chain is Nitric oxide synthase-interacting protein homolog, found in Drosophila melanogaster (Fruit fly).